A 176-amino-acid chain; its full sequence is Calcium and integrin-binding family member 2 (176 aa).

3 EF-hand domains span residues 55 to 90 (RENPFKERIVEAFSEDGEGNLTFNDFVDMFSVLCES), 92 to 127 (PRDLKASYAFKIYDFNTDNFICKEDLQLTLARLTKS), and 133 to 168 (EVVLVCDKVIEEADLDGDGKLGFADFEDMIAKAPDF). The Ca(2+) site is built by Asp-105, Asn-107, Asp-109, Asp-116, Asp-146, Asp-148, Asp-150, Lys-152, and Asp-157.

Monomer. Homodimer. Interacts with WHRN and MYO7A. Interacts with ITGA2B (via C-terminus cytoplasmic tail region); the interactions are stabilized/increased in a calcium and magnesium-dependent manner. Interacts with ITGA7 (via C-terminus cytoplasmic tail region); the interactions are stabilized/increased in a calcium and magnesium-dependent manner. Interacts with TMC1. Interacts with TMC2. As to expression, expressed in liver, heart, kidney, brain, spleen, stomach, ovary, testis and muscle.

It is found in the cytoplasm. The protein resides in the cell projection. Its subcellular location is the stereocilium. It localises to the photoreceptor inner segment. The protein localises to the cilium. It is found in the photoreceptor outer segment. The protein resides in the cell membrane. Its subcellular location is the sarcolemma. Functionally, calcium- and integrin-binding protein that plays a role in intracellular calcium homeostasis. Acts as an auxiliary subunit of the sensory mechanoelectrical transduction (MET) channel in hair cells. Essential for mechanoelectrical transduction (MET) currents in auditory hair cells and thereby required for hearing. Regulates the function of hair cell mechanotransduction by controlling the distribution of transmembrane channel-like proteins TMC1 and TMC2, and by regulating the function of the MET channels in hair cells. Required for the maintenance of auditory hair cell stereocilia bundle morphology and function and for hair-cell survival in the cochlea. Critical for proper photoreceptor cell maintenance and function. Plays a role in intracellular calcium homeostasis by decreasing ATP-induced calcium release. The chain is Calcium and integrin-binding family member 2 (CIB2) from Ovis aries (Sheep).